A 169-amino-acid chain; its full sequence is Putative adenylate kinase (169 aa).

ATP is bound by residues G10, G12, K13, T14, and T15. Positions 28–51 are NMP; the sequence is HLNDLVGTEGLYDGVDADRGSKIV. The tract at residues 98 to 108 is LID; the sequence is DRGDSPEKAAE. An ATP-binding site is contributed by R99.

Belongs to the adenylate kinase family. AK6 subfamily. As to quaternary structure, interacts with uS11. Not a structural component of 40S pre-ribosomes, but transiently interacts with them by binding to uS11.

It catalyses the reaction AMP + ATP = 2 ADP. The enzyme catalyses ATP + H2O = ADP + phosphate + H(+). Broad-specificity nucleoside monophosphate (NMP) kinase that catalyzes the reversible transfer of the terminal phosphate group between nucleoside triphosphates and monophosphates. Also has ATPase activity. Involved in the late maturation steps of the 30S ribosomal particles, specifically 16S rRNA maturation. While NMP activity is not required for ribosome maturation, ATPase activity is. Associates transiently with small ribosomal subunit protein uS11. ATP hydrolysis breaks the interaction with uS11. May temporarily remove uS11 from the ribosome to enable a conformational change of the ribosomal RNA that is needed for the final maturation step of the small ribosomal subunit. This is Putative adenylate kinase from Halobacterium salinarum (strain ATCC 29341 / DSM 671 / R1).